Reading from the N-terminus, the 193-residue chain is Fibrillarin-like rRNA/tRNA 2'-O-methyltransferase (193 aa).

S-adenosyl-L-methionine contacts are provided by residues 82–83 (TT), 100–101 (EF), 125–126 (DA), and 145–148 (DVAQ).

This sequence belongs to the methyltransferase superfamily. Fibrillarin family. Interacts with nop5. Component of box C/D small ribonucleoprotein (sRNP) particles that contain rpl7ae, FlpA and nop5, plus a guide RNA.

Functionally, involved in pre-rRNA and tRNA processing. Utilizes the methyl donor S-adenosyl-L-methionine to catalyze the site-specific 2'-hydroxyl methylation of ribose moieties in rRNA and tRNA. Site specificity is provided by a guide RNA that base pairs with the substrate. Methylation occurs at a characteristic distance from the sequence involved in base pairing with the guide RNA. This is Fibrillarin-like rRNA/tRNA 2'-O-methyltransferase from Methanosarcina mazei (Methanosarcina frisia).